The sequence spans 126 residues: Translation initiation factor 5A (126 aa).

Lys36 bears the Hypusine mark.

This sequence belongs to the eIF-5A family.

Its subcellular location is the cytoplasm. Functionally, functions by promoting the formation of the first peptide bond. The protein is Translation initiation factor 5A of Haloarcula marismortui (strain ATCC 43049 / DSM 3752 / JCM 8966 / VKM B-1809) (Halobacterium marismortui).